A 293-amino-acid polypeptide reads, in one-letter code: MSLSKCSNVDLKSVAMNANTVRLEPSLGEYPTLRRDLVECSCSVLTLSMVKRMGKMTNTVWLFGNPKNPLHQLEPGLEQLLDMYYKDMRCYSQRELSALRWPSGKPSVWFLQAAHMFFSIKNSWAMETGRENWRGLFHRITKGQKYLFEGDMILDSLEAIEKRRLRLGLPEILITGLSPILDVALLQIESLARLRGMSLNHHLFTSPSLRKPLLDCWDFFIPVRKKKTDGSYSVLDEDDEPGVLHGYPHLMAHYLNRCPFHNLIRFDEELRTAALNTIWGRDWPAIGDLPKEV.

Positions 21-29 (VRLEPSLGE) are essential for inhibition of IFN-beta activation and interaction with host TBK1. The segment at 66-69 (PKNP) is involved in inclusion bodies formation. The tract at residues 148–220 (FEGDMILDSL…KPLLDCWDFF (73 aa)) is interaction with host TNIP2.

It belongs to the Bandavirus NS-S protein family. In terms of assembly, interacts with the host E3 ubiquitin ligase TRIM25; this interaction sequesters TRIM25 in NSs-induced cytoplasmic inclusion bodies. Interacts with the host E3 ubiquitin ligase RIGI; this interaction sequesters RIGI in NSs-induced cytoplasmic inclusion bodies. Interacts with the host E3 ubiquitin ligase TBK1 (via N-terminus); this interaction sequesters TBK1 in NSs-induced cytoplasmic inclusion bodies and inhibits TBK1 phosphorylation. NSs does not interact with IKBKE/IKKE or IRF3. Interacts with host IRF7; this interaction sequesters IRF7 in NSs-induced cytoplasmic inclusion bodies. Interacts with host SYNGR2; this interaction is essential to promoting the formation of the inclusion bodies to become virus factories for viral RNA replication through its interaction with NSs. Interacts with host STAT2; this interaction sequesters STAT2 in NSs-induced cytoplasmic inclusion bodies. Interacts with host TNIP2; this interaction promotes TPL2 complex formation and signaling activity leading to IL-10 production. Interacts with host TRIM21 (via B30.2/SPRY domain); this interaction activates host NFE2L2-mediated transcriptional activation of antioxidant genes. Interacts with host CDK1; this interaction is inclusion body dependent, it inhibits the formation and nuclear import of the cyclin B1-CDK1 complex and leads to host cell cycle arrest.

Its subcellular location is the host cytoplasm. The protein resides in the host cytoplasmic vesicle. In terms of biological role, sequesters host STAT2 into viral inclusion bodies. Impairs IFN-stimulated phosphorylation and nuclear translocation of host STAT2, thereby suppressing type-I IFN antiviral signaling. Sequesters host TRIM25, RIGI, TBK1/IKK complex components (TBK1, IKBKE/IKKE, and IRF3) and IRF7 into viral inclusion bodies, thereby inhibiting the IFN responses. Inhibits TRIM25-mediated ubiquitination of the RIGI. The sequestration of IKBKE/IKKE, and IRF3 occurs via the interaction with TBK1. Sequestration and inhibition of host TBK1 probably participates to the cytokine storm induced by the virus. Also inhibits the phosphorylation of host TBK1. Interacts with host TNIP2 and promotes TPL2-TNIP2-p105 complex formation leading to IL-10 induction. By interacting with CDK1, induces host cell arrest at the G2/M transition to promote viral replication. Requested for the formation of the viral cytoplasmic inclusion bodies. This chain is Non-structural protein NS-S (NSS), found in SFTS phlebovirus (isolate SFTSV/Human/China/HB29/2010) (Severe fever with thrombocytopenia virus).